The primary structure comprises 241 residues: Probable 2-phosphosulfolactate phosphatase (241 aa).

The protein belongs to the ComB family. The cofactor is Mg(2+).

It carries out the reaction (2R)-O-phospho-3-sulfolactate + H2O = (2R)-3-sulfolactate + phosphate. The protein is Probable 2-phosphosulfolactate phosphatase of Deinococcus geothermalis (strain DSM 11300 / CIP 105573 / AG-3a).